The chain runs to 211 residues: Thiamine-phosphate synthase (211 aa).

4-amino-2-methyl-5-(diphosphooxymethyl)pyrimidine contacts are provided by residues 37-41 and N69; that span reads QLRIK. Residues D70 and D89 each contribute to the Mg(2+) site. S108 provides a ligand contact to 4-amino-2-methyl-5-(diphosphooxymethyl)pyrimidine. 2-[(2R,5Z)-2-carboxy-4-methylthiazol-5(2H)-ylidene]ethyl phosphate is bound at residue 134 to 136; that stretch reads TQT. K137 serves as a coordination point for 4-amino-2-methyl-5-(diphosphooxymethyl)pyrimidine. 2-[(2R,5Z)-2-carboxy-4-methylthiazol-5(2H)-ylidene]ethyl phosphate-binding positions include G166 and 186–187; that span reads VS.

This sequence belongs to the thiamine-phosphate synthase family. Mg(2+) is required as a cofactor.

It catalyses the reaction 2-[(2R,5Z)-2-carboxy-4-methylthiazol-5(2H)-ylidene]ethyl phosphate + 4-amino-2-methyl-5-(diphosphooxymethyl)pyrimidine + 2 H(+) = thiamine phosphate + CO2 + diphosphate. It carries out the reaction 2-(2-carboxy-4-methylthiazol-5-yl)ethyl phosphate + 4-amino-2-methyl-5-(diphosphooxymethyl)pyrimidine + 2 H(+) = thiamine phosphate + CO2 + diphosphate. The enzyme catalyses 4-methyl-5-(2-phosphooxyethyl)-thiazole + 4-amino-2-methyl-5-(diphosphooxymethyl)pyrimidine + H(+) = thiamine phosphate + diphosphate. It participates in cofactor biosynthesis; thiamine diphosphate biosynthesis; thiamine phosphate from 4-amino-2-methyl-5-diphosphomethylpyrimidine and 4-methyl-5-(2-phosphoethyl)-thiazole: step 1/1. Functionally, condenses 4-methyl-5-(beta-hydroxyethyl)thiazole monophosphate (THZ-P) and 2-methyl-4-amino-5-hydroxymethyl pyrimidine pyrophosphate (HMP-PP) to form thiamine monophosphate (TMP). The sequence is that of Thiamine-phosphate synthase from Enterobacter sp. (strain 638).